Reading from the N-terminus, the 1273-residue chain is Chitin synthase 7 (1273 aa).

Residues 1–69 (MPAVERNAPF…LINPSSGGPG (69 aa)) are disordered. Over 1–79 (MPAVERNAPF…FSAASRSKHR (79 aa)) the chain is Cytoplasmic. The helical transmembrane segment at 80-100 (FSWWTAFSLFVTFWAPSPLLS) threads the bilayer. The Extracellular segment spans residues 101-117 (SCCGLKDKQSRQAWREK). The helical transmembrane segment at 118 to 138 (VSLVFIAILLGGFIGFITMGL) threads the bilayer. Topologically, residues 139–360 (NAALCPSASS…FISNLVLYCS (222 aa)) are cytoplasmic. The chain crosses the membrane as a helical span at residues 361–381 (LVVILAIVLIRFFMAVWFAWF). Residues 382-820 (MAGRMSSPPR…LCGTFCFSMQ (439 aa)) lie on the Extracellular side of the membrane. An N-linked (GlcNAc...) asparagine glycan is attached at asparagine 412. The disordered stretch occupies residues 416–451 (AAPWANKQRPPPSQPARRRRDSAQSATPSVPDSLSV). Residues asparagine 667 and asparagine 796 are each glycosylated (N-linked (GlcNAc...) asparagine). The chain crosses the membrane as a helical span at residues 821-841 (FVVFMDLLGTAVLPISIALTY). Over 842 to 857 (TLVVTYCLNPPHSFTE) the chain is Cytoplasmic. The chain crosses the membrane as a helical span at residues 858–878 (AIPLMLLVAVIGMPALLILLA). At 879–881 (TRK) the chain is on the extracellular side. The chain crosses the membrane as a helical span at residues 882 to 902 (VVYVLWMLIYLLALPVWNFVL). Over 903 to 1273 (PVYSFWHFDD…RGRSYHDRFS (371 aa)) the chain is Cytoplasmic. 2 disordered regions span residues 966–1009 (RELE…SVTV) and 1126–1273 (NGGG…DRFS). Over residues 1000-1009 (SDSFSDSVTV) the composition is skewed to low complexity. Over residues 1215 to 1232 (QHPPQPSQPPQPPQPAQP) the composition is skewed to pro residues. Residues 1233 to 1246 (TRPGGAPAAPPRGA) show a composition bias toward low complexity.

This sequence belongs to the chitin synthase family. Class IV subfamily.

The protein localises to the cell membrane. The protein resides in the cytoplasmic vesicle membrane. The enzyme catalyses [(1-&gt;4)-N-acetyl-beta-D-glucosaminyl](n) + UDP-N-acetyl-alpha-D-glucosamine = [(1-&gt;4)-N-acetyl-beta-D-glucosaminyl](n+1) + UDP + H(+). Its function is as follows. Polymerizes chitin, a structural polymer of the cell wall and septum, by transferring the sugar moiety of UDP-GlcNAc to the non-reducing end of the growing chitin polymer. In Mycosarcoma maydis (Corn smut fungus), this protein is Chitin synthase 7.